A 510-amino-acid polypeptide reads, in one-letter code: 3,4-dihydroxyphenylacetaldehyde synthase (510 aa).

Residue Asn-192 is part of the active site. N6-(pyridoxal phosphate)lysine is present on Lys-303.

Belongs to the group II decarboxylase family. The cofactor is pyridoxal 5'-phosphate.

The catalysed reaction is L-dopa + O2 + H2O + H(+) = 3,4-dihydroxyphenylacetaldehyde + H2O2 + NH4(+) + CO2. Functionally, catalyzes the decarboxylation-oxidative deamination of L-3,4-dihydroxyphenylalanine (L-DOPA) to 3,4-dihydroxylphenylacetaldehyde (DHPAA). Involved in cuticle development. Probably responsible for the protein cross-linking during the development of flexible cuticles. The chain is 3,4-dihydroxyphenylacetaldehyde synthase (amd) from Drosophila melanogaster (Fruit fly).